The primary structure comprises 96 residues: Small ribosomal subunit protein bS6 (96 aa).

The protein belongs to the bacterial ribosomal protein bS6 family.

Its function is as follows. Binds together with bS18 to 16S ribosomal RNA. This is Small ribosomal subunit protein bS6 from Cutibacterium acnes (strain DSM 16379 / KPA171202) (Propionibacterium acnes).